A 708-amino-acid chain; its full sequence is Polyribonucleotide nucleotidyltransferase (708 aa).

Mg(2+) is bound by residues Asp-488 and Asp-494. One can recognise a KH domain in the interval 555–615; it reads PIIKVTKVDP…ENVDKAIELI (61 aa). One can recognise an S1 motif domain in the interval 625–692; that stretch reads GEVLEGKVTR…DLGRLQFKRV (68 aa).

It belongs to the polyribonucleotide nucleotidyltransferase family. Mg(2+) is required as a cofactor.

It is found in the cytoplasm. It carries out the reaction RNA(n+1) + phosphate = RNA(n) + a ribonucleoside 5'-diphosphate. Its function is as follows. Involved in mRNA degradation. Catalyzes the phosphorolysis of single-stranded polyribonucleotides processively in the 3'- to 5'-direction. The polypeptide is Polyribonucleotide nucleotidyltransferase (Thermotoga petrophila (strain ATCC BAA-488 / DSM 13995 / JCM 10881 / RKU-1)).